Reading from the N-terminus, the 159-residue chain is Transcription elongation factor GreA (159 aa).

A coiled-coil region spans residues Ala47–Ala73.

It belongs to the GreA/GreB family.

Functionally, necessary for efficient RNA polymerase transcription elongation past template-encoded arresting sites. The arresting sites in DNA have the property of trapping a certain fraction of elongating RNA polymerases that pass through, resulting in locked ternary complexes. Cleavage of the nascent transcript by cleavage factors such as GreA or GreB allows the resumption of elongation from the new 3'terminus. GreA releases sequences of 2 to 3 nucleotides. The chain is Transcription elongation factor GreA from Chlorobium phaeobacteroides (strain DSM 266 / SMG 266 / 2430).